Consider the following 285-residue polypeptide: Bifunctional protein FolD (285 aa).

NADP(+)-binding positions include 166 to 168 (GAS) and isoleucine 232.

It belongs to the tetrahydrofolate dehydrogenase/cyclohydrolase family. As to quaternary structure, homodimer.

The enzyme catalyses (6R)-5,10-methylene-5,6,7,8-tetrahydrofolate + NADP(+) = (6R)-5,10-methenyltetrahydrofolate + NADPH. The catalysed reaction is (6R)-5,10-methenyltetrahydrofolate + H2O = (6R)-10-formyltetrahydrofolate + H(+). The protein operates within one-carbon metabolism; tetrahydrofolate interconversion. In terms of biological role, catalyzes the oxidation of 5,10-methylenetetrahydrofolate to 5,10-methenyltetrahydrofolate and then the hydrolysis of 5,10-methenyltetrahydrofolate to 10-formyltetrahydrofolate. The protein is Bifunctional protein FolD of Buchnera aphidicola subsp. Schizaphis graminum (strain Sg).